The following is an 86-amino-acid chain: Anti-adapter protein IraP (86 aa).

A coiled-coil region spans residues Met1–Met36.

This sequence belongs to the IraP family. Interacts with RssB.

Its subcellular location is the cytoplasm. In terms of biological role, inhibits RpoS proteolysis by regulating RssB activity, thereby increasing the stability of the sigma stress factor RpoS especially during phosphate starvation, but also in stationary phase and during nitrogen starvation. Its effect on RpoS stability is due to its interaction with RssB, which probably blocks the interaction of RssB with RpoS, and the consequent delivery of the RssB-RpoS complex to the ClpXP protein degradation pathway. The protein is Anti-adapter protein IraP of Shigella flexneri serotype 5b (strain 8401).